We begin with the raw amino-acid sequence, 499 residues long: ADP,ATP carrier protein 5 (499 aa).

The next 11 helical transmembrane spans lie at 25 to 45 (LGKF…QNIL), 61 to 81 (IAGF…VIIY), 93 to 113 (IFYY…FVIY), 148 to 168 (YIVY…LLFW), 183 to 203 (FYTF…FLMM), 223 to 243 (ITLV…CCVL), 286 to 306 (LWLL…VEAV), 327 to 347 (LYIL…NNVM), 356 to 376 (AVIS…LIVF), 380 to 400 (ILSL…VSIG), and 468 to 488 (SISP…IYAV).

Belongs to the ADP/ATP translocase tlc family.

The protein localises to the cell membrane. Provides the rickettsial cell with host ATP in exchange for rickettsial ADP. This is an obligate exchange system. This energy acquiring activity is an important component of rickettsial parasitism. The sequence is that of ADP,ATP carrier protein 5 (tlcE) from Rickettsia felis (strain ATCC VR-1525 / URRWXCal2) (Rickettsia azadi).